The chain runs to 222 residues: Protein-L-isoaspartate O-methyltransferase (222 aa).

Ser73 is a catalytic residue.

This sequence belongs to the methyltransferase superfamily. L-isoaspartyl/D-aspartyl protein methyltransferase family.

The protein resides in the cytoplasm. The catalysed reaction is [protein]-L-isoaspartate + S-adenosyl-L-methionine = [protein]-L-isoaspartate alpha-methyl ester + S-adenosyl-L-homocysteine. In terms of biological role, catalyzes the methyl esterification of L-isoaspartyl residues in peptides and proteins that result from spontaneous decomposition of normal L-aspartyl and L-asparaginyl residues. It plays a role in the repair and/or degradation of damaged proteins. This is Protein-L-isoaspartate O-methyltransferase from Chromobacterium violaceum (strain ATCC 12472 / DSM 30191 / JCM 1249 / CCUG 213 / NBRC 12614 / NCIMB 9131 / NCTC 9757 / MK).